Reading from the N-terminus, the 1937-residue chain is Myosin-2 (1937 aa).

The region spanning 33–82 is the Myosin N-terminal SH3-like domain; that stretch reads DAKTSVFVAEPKESFVKGTIQSREGGKVTVKTDAGATLTVKEDQVFPMNP. Phosphothreonine occurs at positions 64 and 69. The Myosin motor domain occupies 86–780; it reads DKIEDMAMMT…LLGLLEEMRD (695 aa). Position 130 is an N6,N6,N6-trimethyllysine (lysine 130). 179–186 is a binding site for ATP; that stretch reads GESGAGKT. Phosphotyrosine is present on tyrosine 387. Threonine 417 carries the post-translational modification Phosphothreonine. Serine 623 carries the phosphoserine modification. The segment at 657–679 is actin-binding; the sequence is LNKLMTNLRSTHPHFVRCIIPNE. Histidine 755 bears the Pros-methylhistidine mark. Residues 759–773 are actin-binding; the sequence is KFGHTKVFFKAGLLG. The IQ domain maps to 783–812; it reads LAQIITRTQARCRGFLARVEYQKMVERRES. Positions 841-1937 form a coiled coil; the sequence is LLKSAETEKE…EVHTKIISEE (1097 aa). Serine 1094 is subject to Phosphoserine. 2 disordered regions span residues 1124–1145 and 1151–1170; these read IEAE…SREL and RLEE…KKRE. Residues 1126-1145 are compositionally biased toward basic and acidic residues; that stretch reads AERASRAKAEKQRSDLSREL. A phosphoserine mark is found at serine 1160 and serine 1235. Threonine 1239 is subject to Phosphothreonine. At serine 1241 the chain carries Phosphoserine. Threonine 1253 carries the phosphothreonine modification. Residue serine 1259 is modified to Phosphoserine. At threonine 1284 the chain carries Phosphothreonine. 3 positions are modified to phosphoserine: serine 1290, serine 1301, and serine 1304. Tyrosine 1462 bears the Phosphotyrosine mark. Threonine 1465 bears the Phosphothreonine mark. Serine 1472 is modified (phosphoserine). Tyrosine 1490 is modified (phosphotyrosine). Phosphoserine is present on serine 1493. Threonine 1499 is subject to Phosphothreonine. At serine 1512 the chain carries Phosphoserine. Threonine 1515 bears the Phosphothreonine mark. Serine 1540, serine 1552, serine 1572, serine 1712, and serine 1724 each carry phosphoserine. Residues threonine 1728 and threonine 1734 each carry the phosphothreonine modification. Serine 1737 carries the post-translational modification Phosphoserine. Residues 1883–1913 form a disordered region; the sequence is QAEEAEEQSNTNLSKFRKLQHELEEAEERAD.

Belongs to the TRAFAC class myosin-kinesin ATPase superfamily. Myosin family. In terms of assembly, muscle myosin is a hexameric protein that consists of 2 heavy chain subunits (MHC), 2 alkali light chain subunits (MLC) and 2 regulatory light chain subunits (MLC-2). Interacts with GCSAM.

The protein resides in the cytoplasm. It is found in the myofibril. Its function is as follows. Myosins are actin-based motor molecules with ATPase activity essential for muscle contraction. The protein is Myosin-2 (MYH2) of Equus caballus (Horse).